Consider the following 386-residue polypeptide: MEELDALLEELERCTFQDSEEYSNPVSCHLDQQSTEESKIPQTPKTLSSQGNTSPLKVQLVYATNIQEPNVYSEVQEPKESVLPPKTSAAAQLDELMAHLSEMQAKVSVKADTSRKPLPDQQDHKASLDSMLGDLEQELQDLGIATVPKGYCASCQKPIAGKVIHALGQSWHPEHFVCTHCKEELGSSPFFERSGLAYCSKDYHRLFSPRCAYCAAPITDKVLTAMNKTWHPEHFFCSHCGEVFGAEGFHEKDKKPYCRKDFLAMFSPKCGGCNRPVLENYLSAMNTVWHPECFVCGDCFSSFSSGSFFELDGRPFCELHYHHRRGTLCHDCGQPITGRCISAMGHKFHPEHFVCAFCLTQLPKGIFKEQNNKTYCEKCFTKLFSQ.

M1 carries the N-acetylmethionine modification. Residues 3–15 (ELDALLEELERCT) carry the LD motif 1 motif. At S19 the chain carries Phosphoserine. Positions 19-52 (SEEYSNPVSCHLDQQSTEESKIPQTPKTLSSQGN) are disordered. Y22 bears the Phosphotyrosine mark. Residues 22–52 (YSNPVSCHLDQQSTEESKIPQTPKTLSSQGN) are compositionally biased toward polar residues. S54 is subject to Phosphoserine. Y62 carries the post-translational modification Phosphotyrosine. 2 consecutive short sequence motifs (LD motif) follow at residues 70–82 (NVYSEVQEPKESV) and 92–103 (QLDELMAHLSEM). Y72 carries the post-translational modification Phosphotyrosine; by LYN. S81 bears the Phosphoserine mark. 4 LIM zinc-binding domains span residues 150 to 208 (GYCA…RLFS), 209 to 267 (PRCA…AMFS), 268 to 326 (PKCG…HRRG), and 327 to 386 (TLCH…LFSQ).

It belongs to the paxillin family. Interacts with unphosphorylated ITGA4. Interacts with AR and SRF. Interacts with PTK2B/PYK2, PTPN22 and PTPN12. Interacts (via LD motif 3) with LYN and the interaction is induced upon B-cell antigen receptor (BCR) activation. Interacts (via LD motif 3) with PTK2/FAK. In terms of processing, phosphorylated on tyrosine residues. Phosphorylation on Tyr-72 is important for its inhibitory function. Bombesin stimulates phosphorylation on Tyr-22, Tyr-62 and Tyr-72. As to expression, expressed in osteoclasts (at protein level). Highly expressed in vascular smooth muscle.

It localises to the cytoplasm. Its subcellular location is the cell junction. The protein resides in the focal adhesion. The protein localises to the nucleus. It is found in the perinuclear region. It localises to the cell projection. Its subcellular location is the podosome. The protein resides in the cell membrane. Its function is as follows. Transcriptional coactivator for androgen receptor (AR) and serum response factor (SRF). Contributes to the regulation of cell adhesion, spreading and cell migration and acts as a negative regulator in integrin-mediated cell adhesion events. Suppresses the integrin-induced tyrosine phosphorylation of paxillin (PXN). May play a critical role as an adapter protein in the formation of the adhesion zone in osteoclasts. Negatively regulates B-cell antigen receptor (BCR) signaling. The chain is Leupaxin (Lpxn) from Mus musculus (Mouse).